A 395-amino-acid polypeptide reads, in one-letter code: uncharacterized protein (395 aa).

Transmembrane regions (helical) follow at residues 15 to 35 (ILAF…VTVF), 56 to 76 (WPWI…NIII), 86 to 106 (FHAP…FQIV), 131 to 151 (AVLL…LITW), 175 to 195 (WFSF…IFIA), 254 to 274 (LANI…FAIV), 298 to 318 (IAIT…TQFV), and 348 to 368 (VYIP…QVVI).

It is found in the cell membrane. This is an uncharacterized protein from Mycoplasma pneumoniae (strain ATCC 29342 / M129 / Subtype 1) (Mycoplasmoides pneumoniae).